The chain runs to 1143 residues: MSDAEGQGFVHLRVRSAYSLLEGAIKADQIGKLAAEAKMPAAGLADRANLFGALEYSSYAKDAGVQPIIGCAIPVVGIGGGPTERWARAPTLMLLAQNERGYLNLSELSSIAYLDSAELPEPVVPWAKVAEHSEGLILLSGGTDGPVDALFAAGKTAEASAALAEMHRVFGDRFYVELQRHGLPRQAAAEPGLVNWAYDHDVPLVATNDVYFAKPGFYDAHDALLCISDGAFVGQDERRRVTPEHWFKPAEEMRKLFADLPEACDNTLDIARRCAFMVHKRDPILPSFPTGDGRNEAEELEHQAREGLKMRLEGLTLSAPEEEYWKRLDFELGIIKKMGFPGYFLIVSDFIKWGKAHGIPVGPGRGSGAGSLVAWVLTITDLDPLRFGLLFERFLNPERVSMPDFDVDFCQERREEVISYVQEKYGRDRVAQIITFGSLQARAVLRDVGRVMQLPLGLVDRLCKMVPNNPAAPVTLAQAIDLEPRLKQAKKEDANVSACLDVALQLEGLFRNASTHAAGLVIGDRPLTQLTPLYKDPRSDLPATQFNMKWVESAGLVKFDFLGLKTLTVLDRAVKHLKKRGFEIDLGKLPFDDAKTYELLASGQTVGVFQLESQGMRDTLRKMRCGSIEEITALISLYRPGPMDNIDTFVDCKFGRKPVDTLHPSLEAVLKETYGVIVYQEQVMQIAQILAGYSLGEADLLRRAMGKKKKEEMDLQKIRFVSGAKEKNVPEEQSGSIFELVAKFAGYGFNKSHAAAYAFISYQTAWLKANTPVEFFAASMSLDLSNTDKLAVFHQDARRFGITVRAPDVNRSGADFEVENGEVLYALGAIRNVGLEAMKHLVAVRAEGGPFRDVFDFVERIDPRQVNKRAIENLARAGAFDSIHKNRAQIVASADVLIAHAQSCHADRQGGQGGLFGSDPGAGRPRLSKTENWNQVDLLDEELSAVGFYLTGHPLEDMVGMLRRRRTVMLAEAMAQAEAGAEAFRMCGVVRRRQERASQSGEKFAFVSLSDPTGEYEVLYPPESLRKCRDVLEPGKAVAIKVRAKARDGEVRFFGDDAEPIEKAVENVVAGLRVHLSPSAAEIDALKRRLEPAQAQKGGEVTFVAAIGGGREIELRLPGRYTLDAALRGALKTAPGVALLEDV.

The protein belongs to the DNA polymerase type-C family. DnaE subfamily. In terms of assembly, DNA polymerase III contains a core (composed of alpha, epsilon and theta chains) that associates with a tau subunit. This core dimerizes to form the PolIII' complex. PolIII' associates with the gamma complex (composed of gamma, delta, delta', psi and chi chains) and with the beta chain to form the complete DNA polymerase III complex.

The protein resides in the cytoplasm. It carries out the reaction DNA(n) + a 2'-deoxyribonucleoside 5'-triphosphate = DNA(n+1) + diphosphate. In terms of biological role, DNA polymerase III is a complex, multichain enzyme responsible for most of the replicative synthesis in bacteria. This DNA polymerase also exhibits 3' to 5' exonuclease activity. The alpha chain is the DNA polymerase. This is DNA polymerase III subunit alpha (dnaE1) from Caulobacter vibrioides (strain NA1000 / CB15N) (Caulobacter crescentus).